Here is a 403-residue protein sequence, read N- to C-terminus: MDFNVKKLASDAGVFFSRAMQFTEEKLGQAEKTELDAHFENLLARADSTKNWTEKILRQTEVLLQPNPSARVEEFLYEKLDRKVPSRVTNGELLAQYMTEAANDFGPGTPYGKTLIKVGETQRRLGAAERDFIHSASINFLTPLRNFLEGDWRTISKERRILQNRRLDLDACKARLKKAKAAEAKAAAVPDFQETRPRNYVLSASASALWSDEVEKAEHELRLTQTEFDRQAEVTRLLLEGISSTHVNHLRCLHEFVESQTNYYAQCYQYMLDLQKQLGRFSGTFVGNAESTSPPPAAASPPAVAATTLPAVPTIPVVPTIVGVPNTVAESVLNPNEVKPPASGTRKARVLYDYEAADSTELALLADEMITVYSLPGMDPDWLIGERGNQKGKVPVTYLELLS.

Residues 1–27 (MDFNVKKLASDAGVFFSRAMQFTEEKL) form a membrane-binding amphipathic helix region. In terms of domain architecture, BAR spans 24 to 287 (EEKLGQAEKT…LGRFSGTFVG (264 aa)). The stretch at 210 to 233 (WSDEVEKAEHELRLTQTEFDRQAE) forms a coiled coil. Positions 343–403 (SGTRKARVLY…VPVTYLELLS (61 aa)) constitute an SH3 domain.

This sequence belongs to the endophilin family. Homodimer, and heterodimer with SH3GLB1.

It is found in the cytoplasm. The chain is Endophilin-B2 from Gallus gallus (Chicken).